Consider the following 314-residue polypeptide: Lipoyl synthase (314 aa).

[4Fe-4S] cluster contacts are provided by Cys61, Cys66, Cys72, Cys87, Cys91, Cys94, and Ser301. The Radical SAM core domain occupies 73–290 (FGRGTATFMI…ERIATNLGFS (218 aa)).

This sequence belongs to the radical SAM superfamily. Lipoyl synthase family. The cofactor is [4Fe-4S] cluster.

The protein localises to the cytoplasm. The catalysed reaction is [[Fe-S] cluster scaffold protein carrying a second [4Fe-4S](2+) cluster] + N(6)-octanoyl-L-lysyl-[protein] + 2 oxidized [2Fe-2S]-[ferredoxin] + 2 S-adenosyl-L-methionine + 4 H(+) = [[Fe-S] cluster scaffold protein] + N(6)-[(R)-dihydrolipoyl]-L-lysyl-[protein] + 4 Fe(3+) + 2 hydrogen sulfide + 2 5'-deoxyadenosine + 2 L-methionine + 2 reduced [2Fe-2S]-[ferredoxin]. Its pathway is protein modification; protein lipoylation via endogenous pathway; protein N(6)-(lipoyl)lysine from octanoyl-[acyl-carrier-protein]: step 2/2. Its function is as follows. Catalyzes the radical-mediated insertion of two sulfur atoms into the C-6 and C-8 positions of the octanoyl moiety bound to the lipoyl domains of lipoate-dependent enzymes, thereby converting the octanoylated domains into lipoylated derivatives. This is Lipoyl synthase from Nitrosomonas eutropha (strain DSM 101675 / C91 / Nm57).